We begin with the raw amino-acid sequence, 493 residues long: 3-octaprenyl-4-hydroxybenzoate carboxy-lyase (493 aa).

N172 serves as a coordination point for Mn(2+). Residues 175–177, 189–191, and 194–195 contribute to the prenylated FMN site; these read IYR, RWL, and RG. A Mn(2+)-binding site is contributed by E238. Residue D287 is the Proton donor of the active site.

It belongs to the UbiD family. Homohexamer. It depends on prenylated FMN as a cofactor. Mn(2+) serves as cofactor.

It is found in the cell membrane. The enzyme catalyses a 4-hydroxy-3-(all-trans-polyprenyl)benzoate + H(+) = a 2-(all-trans-polyprenyl)phenol + CO2. The protein operates within cofactor biosynthesis; ubiquinone biosynthesis. In terms of biological role, catalyzes the decarboxylation of 3-octaprenyl-4-hydroxy benzoate to 2-octaprenylphenol, an intermediate step in ubiquinone biosynthesis. The protein is 3-octaprenyl-4-hydroxybenzoate carboxy-lyase of Shewanella loihica (strain ATCC BAA-1088 / PV-4).